We begin with the raw amino-acid sequence, 326 residues long: D-alanine--D-alanine ligase (326 aa).

In terms of domain architecture, ATP-grasp spans 114–313 (KRVWLQHGLR…YAELCVSIVS (200 aa)). Position 140 to 195 (140 to 195 (PDRLGLPLILKPPHEGSTVGITKVAGYSDMKEGYAQAAKFDDEVLAEQFIAGRELT)) interacts with ATP. 3 residues coordinate Mg(2+): aspartate 267, glutamate 280, and asparagine 282.

This sequence belongs to the D-alanine--D-alanine ligase family. It depends on Mg(2+) as a cofactor. Requires Mn(2+) as cofactor.

The protein resides in the cytoplasm. The catalysed reaction is 2 D-alanine + ATP = D-alanyl-D-alanine + ADP + phosphate + H(+). It participates in cell wall biogenesis; peptidoglycan biosynthesis. In terms of biological role, cell wall formation. This is D-alanine--D-alanine ligase from Bordetella petrii (strain ATCC BAA-461 / DSM 12804 / CCUG 43448).